The chain runs to 466 residues: Ribosomal protein uS12 methylthiotransferase RimO (466 aa).

One can recognise an MTTase N-terminal domain in the interval 18–133; it reads PRIGFVSLGC…VMDAVHQHVP (116 aa). 6 residues coordinate [4Fe-4S] cluster: cysteine 27, cysteine 63, cysteine 92, cysteine 164, cysteine 168, and cysteine 171. The region spanning 150-391 is the Radical SAM core domain; sequence LTPKHYAYLK…MAVAEAVSTA (242 aa). A TRAM domain is found at 394 to 466; the sequence is QRRVGSSMQV…QGHDLIGELI (73 aa).

The protein belongs to the methylthiotransferase family. RimO subfamily. The cofactor is [4Fe-4S] cluster.

It is found in the cytoplasm. The catalysed reaction is L-aspartate(89)-[ribosomal protein uS12]-hydrogen + (sulfur carrier)-SH + AH2 + 2 S-adenosyl-L-methionine = 3-methylsulfanyl-L-aspartate(89)-[ribosomal protein uS12]-hydrogen + (sulfur carrier)-H + 5'-deoxyadenosine + L-methionine + A + S-adenosyl-L-homocysteine + 2 H(+). Its function is as follows. Catalyzes the methylthiolation of an aspartic acid residue of ribosomal protein uS12. The sequence is that of Ribosomal protein uS12 methylthiotransferase RimO from Leptothrix cholodnii (strain ATCC 51168 / LMG 8142 / SP-6) (Leptothrix discophora (strain SP-6)).